We begin with the raw amino-acid sequence, 506 residues long: MTWNEGYVLEVNYTYGFYGELSPLKLALANTLKSLKSPNLEKNFNYCELACGRGYSTNLLASCYPQAQFYANDFNPSHIVEARTLAETAGTKNVHFFDDSFEEFINQDLPQFDFIVLHGIYSWITPRNRQAIVNFIRQKIKVGGMVYISYNTLPGWAAARPMQALMLRYGRNSSEPILSRIEKALDFTEQMLESKANYFTQNPILKPRLEKLKEQNRYYLAHEYFNEEWNAFYFDEVAKELEEAKLNFMGSAHLIDYVDAVNLSSAAQTQLSQVTDPTFREVVRDFFLNTQFRRDIFVRGKLALLPQEHLQALGNLRFALVVPIKSIKLKQQFPLGEVELQEKVYRPICEALENGPLTLGELQKDSKTKGITLNSLYQALIIMTGIGYTHPAVNETVRKQRQKSTDAFNSAVKTKSLYSDEMAFLASPLVGTGIAVNRLEQLLLLAKERKQDGPQFVWQVLSSQGKKIIKEGKTLETEAENLEHLKNVAENFNGDRLPLLTKLGIS.

This sequence to R.prowazekii RP789, RP027 and RP028.

This is an uncharacterized protein from Synechocystis sp. (strain ATCC 27184 / PCC 6803 / Kazusa).